The following is a 265-amino-acid chain: Phosphatidylserine decarboxylase proenzyme (265 aa).

Residues Asp86, His142, and Ser226 each act as charge relay system; for autoendoproteolytic cleavage activity in the active site. The active-site Schiff-base intermediate with substrate; via pyruvic acid; for decarboxylase activity is Ser226. At Ser226 the chain carries Pyruvic acid (Ser); by autocatalysis.

The protein belongs to the phosphatidylserine decarboxylase family. PSD-B subfamily. Prokaryotic type I sub-subfamily. In terms of assembly, heterodimer of a large membrane-associated beta subunit and a small pyruvoyl-containing alpha subunit. Pyruvate serves as cofactor. In terms of processing, is synthesized initially as an inactive proenzyme. Formation of the active enzyme involves a self-maturation process in which the active site pyruvoyl group is generated from an internal serine residue via an autocatalytic post-translational modification. Two non-identical subunits are generated from the proenzyme in this reaction, and the pyruvate is formed at the N-terminus of the alpha chain, which is derived from the carboxyl end of the proenzyme. The autoendoproteolytic cleavage occurs by a canonical serine protease mechanism, in which the side chain hydroxyl group of the serine supplies its oxygen atom to form the C-terminus of the beta chain, while the remainder of the serine residue undergoes an oxidative deamination to produce ammonia and the pyruvoyl prosthetic group on the alpha chain. During this reaction, the Ser that is part of the protease active site of the proenzyme becomes the pyruvoyl prosthetic group, which constitutes an essential element of the active site of the mature decarboxylase.

It localises to the cell membrane. It catalyses the reaction a 1,2-diacyl-sn-glycero-3-phospho-L-serine + H(+) = a 1,2-diacyl-sn-glycero-3-phosphoethanolamine + CO2. The protein operates within phospholipid metabolism; phosphatidylethanolamine biosynthesis; phosphatidylethanolamine from CDP-diacylglycerol: step 2/2. In terms of biological role, catalyzes the formation of phosphatidylethanolamine (PtdEtn) from phosphatidylserine (PtdSer). The chain is Phosphatidylserine decarboxylase proenzyme from Anoxybacillus flavithermus (strain DSM 21510 / WK1).